The sequence spans 533 residues: Beta-glucosidase 24 (533 aa).

The signal sequence occupies residues 1–26 (MVLQKLPLMSIGLLWLLIIVGPLVNA). Q58 contacts a beta-D-glucoside. N64 and N88 each carry an N-linked (GlcNAc...) asparagine glycan. A beta-D-glucoside-binding positions include H161 and 206–207 (NE). The Proton donor role is filled by E207. C226 and C239 are joined by a disulfide. Position 355 (Y355) interacts with a beta-D-glucoside. Residue N388 is glycosylated (N-linked (GlcNAc...) asparagine). E427 contributes to the a beta-D-glucoside binding site. E427 (nucleophile) is an active-site residue. Residues N437, N442, and N470 are each glycosylated (N-linked (GlcNAc...) asparagine). Residues W477, 484–485 (EW), and F493 each bind a beta-D-glucoside. N503 is a glycosylation site (N-linked (GlcNAc...) asparagine). A Prevents secretion from ER motif is present at residues 530–533 (KDEL).

It belongs to the glycosyl hydrolase 1 family.

The protein resides in the endoplasmic reticulum lumen. The catalysed reaction is Hydrolysis of terminal, non-reducing beta-D-glucosyl residues with release of beta-D-glucose.. The sequence is that of Beta-glucosidase 24 from Arabidopsis thaliana (Mouse-ear cress).